The primary structure comprises 64 residues: Prokaryotic ubiquitin-like protein Pup (64 aa).

The disordered stretch occupies residues 1–38 (MAQEQTKRGGGGGEDDDPTGSTAAGQERREKLTEETDD). Residues 21–58 (STAAGQERREKLTEETDDLLDEIDDVLEENAEDFVRAY) are ARC ATPase binding. Residues 23-52 (AAGQERREKLTEETDDLLDEIDDVLEENAE) are a coiled coil. At Q64 the chain carries Deamidated glutamine. Residue Q64 forms an Isoglutamyl lysine isopeptide (Gln-Lys) (interchain with K-? in acceptor proteins) linkage.

Belongs to the prokaryotic ubiquitin-like protein family. Strongly interacts with the proteasome-associated ATPase ARC through a hydrophobic interface; the interacting region of Pup lies in its C-terminal half. There is one Pup binding site per ARC hexamer ring. In terms of processing, is modified by deamidation of its C-terminal glutamine to glutamate by the deamidase Dop, a prerequisite to the subsequent pupylation process.

The protein operates within protein degradation; proteasomal Pup-dependent pathway. Protein modifier that is covalently attached to lysine residues of substrate proteins, thereby targeting them for proteasomal degradation. The tagging system is termed pupylation. This Mycolicibacterium gilvum (strain PYR-GCK) (Mycobacterium gilvum (strain PYR-GCK)) protein is Prokaryotic ubiquitin-like protein Pup.